A 107-amino-acid polypeptide reads, in one-letter code: Large ribosomal subunit protein P1 (107 aa).

Over residues 67 to 82 the composition is skewed to low complexity; that stretch reads PTATSAAAAPAAGEAS. The tract at residues 67–107 is disordered; sequence PTATSAAAAPAAGEASGKAEEKKKEEPEEEGDDDMGFGLFD. A compositionally biased stretch (basic and acidic residues) spans 83–92; the sequence is GKAEEKKKEE.

This sequence belongs to the eukaryotic ribosomal protein P1/P2 family. P1 and P2 exist as dimers at the large ribosomal subunit.

Its function is as follows. Plays an important role in the elongation step of protein synthesis. The sequence is that of Large ribosomal subunit protein P1 from Leishmania peruviana.